A 492-amino-acid chain; its full sequence is N-succinylglutamate 5-semialdehyde dehydrogenase (492 aa).

220 to 225 provides a ligand contact to NAD(+); the sequence is GSANTG. Active-site residues include Glu-243 and Cys-277.

This sequence belongs to the aldehyde dehydrogenase family. AstD subfamily.

The catalysed reaction is N-succinyl-L-glutamate 5-semialdehyde + NAD(+) + H2O = N-succinyl-L-glutamate + NADH + 2 H(+). Its pathway is amino-acid degradation; L-arginine degradation via AST pathway; L-glutamate and succinate from L-arginine: step 4/5. In terms of biological role, catalyzes the NAD-dependent reduction of succinylglutamate semialdehyde into succinylglutamate. The sequence is that of N-succinylglutamate 5-semialdehyde dehydrogenase from Escherichia fergusonii (strain ATCC 35469 / DSM 13698 / CCUG 18766 / IAM 14443 / JCM 21226 / LMG 7866 / NBRC 102419 / NCTC 12128 / CDC 0568-73).